We begin with the raw amino-acid sequence, 156 residues long: Small ribosomal subunit protein uS7 (156 aa).

It belongs to the universal ribosomal protein uS7 family. Part of the 30S ribosomal subunit. Contacts proteins S9 and S11.

Functionally, one of the primary rRNA binding proteins, it binds directly to 16S rRNA where it nucleates assembly of the head domain of the 30S subunit. Is located at the subunit interface close to the decoding center, probably blocks exit of the E-site tRNA. The sequence is that of Small ribosomal subunit protein uS7 from Prochlorococcus marinus (strain SARG / CCMP1375 / SS120).